A 163-amino-acid polypeptide reads, in one-letter code: 6,7-dimethyl-8-ribityllumazine synthase (163 aa).

5-amino-6-(D-ribitylamino)uracil-binding positions include Phe-27, 58-60 (ALE), and 87-89 (CVI). Residue 92–93 (DT) coordinates (2S)-2-hydroxy-3-oxobutyl phosphate. His-95 functions as the Proton donor in the catalytic mechanism. Asn-120 lines the 5-amino-6-(D-ribitylamino)uracil pocket. Position 134 (Arg-134) interacts with (2S)-2-hydroxy-3-oxobutyl phosphate.

This sequence belongs to the DMRL synthase family.

The enzyme catalyses (2S)-2-hydroxy-3-oxobutyl phosphate + 5-amino-6-(D-ribitylamino)uracil = 6,7-dimethyl-8-(1-D-ribityl)lumazine + phosphate + 2 H2O + H(+). Its pathway is cofactor biosynthesis; riboflavin biosynthesis; riboflavin from 2-hydroxy-3-oxobutyl phosphate and 5-amino-6-(D-ribitylamino)uracil: step 1/2. Catalyzes the formation of 6,7-dimethyl-8-ribityllumazine by condensation of 5-amino-6-(D-ribitylamino)uracil with 3,4-dihydroxy-2-butanone 4-phosphate. This is the penultimate step in the biosynthesis of riboflavin. The protein is 6,7-dimethyl-8-ribityllumazine synthase of Afipia carboxidovorans (strain ATCC 49405 / DSM 1227 / KCTC 32145 / OM5) (Oligotropha carboxidovorans).